The following is a 417-amino-acid chain: RH-like protein IC (417 aa).

Helical transmembrane passes span C12 to T32, L44 to F64, V77 to F97, I125 to V145, F172 to P192, T203 to F223, V238 to L258, I265 to C285, L287 to G307, N331 to T351, and M358 to V378.

It belongs to the ammonium transporter (TC 2.A.49) family. Rh subfamily.

The protein resides in the membrane. May be part of an oligomeric complex which is likely to have a transport or channel function in the erythrocyte membrane. This chain is RH-like protein IC, found in Gorilla gorilla gorilla (Western lowland gorilla).